Reading from the N-terminus, the 131-residue chain is uncharacterized protein (131 aa).

Its subcellular location is the plastid. It localises to the chloroplast. This is an uncharacterized protein from Chlorella vulgaris (Green alga).